The primary structure comprises 168 residues: Small ribosomal subunit protein uS5 (168 aa).

Residues 13–76 (LKEQVVDIKR…EDAKKNLIHV (64 aa)) enclose the S5 DRBM domain.

The protein belongs to the universal ribosomal protein uS5 family. As to quaternary structure, part of the 30S ribosomal subunit. Contacts proteins S4 and S8.

With S4 and S12 plays an important role in translational accuracy. In terms of biological role, located at the back of the 30S subunit body where it stabilizes the conformation of the head with respect to the body. The sequence is that of Small ribosomal subunit protein uS5 from Alkaliphilus oremlandii (strain OhILAs) (Clostridium oremlandii (strain OhILAs)).